Consider the following 93-residue polypeptide: MPRSLKKGPFVDDHLLKKVDLQNSKGTKHVIKTWSRRSTVIPDMLGHTIAVHDGRKHVPVFITEGMVGHKLGEFAPTRTFRGHVKEDRRSRRG.

This sequence belongs to the universal ribosomal protein uS19 family.

Functionally, protein S19 forms a complex with S13 that binds strongly to the 16S ribosomal RNA. The sequence is that of Small ribosomal subunit protein uS19 from Frankia casuarinae (strain DSM 45818 / CECT 9043 / HFP020203 / CcI3).